A 191-amino-acid chain; its full sequence is Elongation factor P-like protein (191 aa).

Belongs to the elongation factor P family.

The polypeptide is Elongation factor P-like protein (Shewanella sediminis (strain HAW-EB3)).